The sequence spans 598 residues: Aspartate--tRNA(Asp/Asn) ligase (598 aa).

Position 170 (Glu170) interacts with L-aspartate. Residues 194-197 form an aspartate region; the sequence is QLFK. Arg216 is an L-aspartate binding site. ATP is bound by residues 216-218 and Gln225; that span reads RDE. His448 serves as a coordination point for L-aspartate. Glu482 contacts ATP. Arg489 serves as a coordination point for L-aspartate. ATP is bound at residue 534 to 537; sequence GWDR. A disordered region spans residues 558–598; sequence GGGVDPLTDAPAPITPQQRKESGIDAKPREDKPKEDAKSKA. The segment covering 575–598 has biased composition (basic and acidic residues); the sequence is QRKESGIDAKPREDKPKEDAKSKA.

It belongs to the class-II aminoacyl-tRNA synthetase family. Type 1 subfamily. As to quaternary structure, homodimer.

The protein localises to the cytoplasm. The enzyme catalyses tRNA(Asx) + L-aspartate + ATP = L-aspartyl-tRNA(Asx) + AMP + diphosphate. Aspartyl-tRNA synthetase with relaxed tRNA specificity since it is able to aspartylate not only its cognate tRNA(Asp) but also tRNA(Asn). Reaction proceeds in two steps: L-aspartate is first activated by ATP to form Asp-AMP and then transferred to the acceptor end of tRNA(Asp/Asn). This is Aspartate--tRNA(Asp/Asn) ligase from Mycolicibacterium smegmatis (strain ATCC 700084 / mc(2)155) (Mycobacterium smegmatis).